A 303-amino-acid polypeptide reads, in one-letter code: N-acetyl-D-glucosamine kinase (303 aa).

ATP-binding positions include 4–11 (GFDVGGTK) and 133–140 (GFGGGLVF). The Zn(2+) site is built by H157, C177, C179, and C184.

Belongs to the ROK (NagC/XylR) family. NagK subfamily.

It catalyses the reaction N-acetyl-D-glucosamine + ATP = N-acetyl-D-glucosamine 6-phosphate + ADP + H(+). It functions in the pathway cell wall biogenesis; peptidoglycan recycling. Functionally, catalyzes the phosphorylation of N-acetyl-D-glucosamine (GlcNAc) derived from cell-wall degradation, yielding GlcNAc-6-P. This is N-acetyl-D-glucosamine kinase from Photobacterium profundum (strain SS9).